A 260-amino-acid polypeptide reads, in one-letter code: Kallikrein-8 (260 aa).

The first 28 residues, 1–28 (MGRPPPCAIQPWILLLLFMGAWAGLTRA), serve as a signal peptide directing secretion. A propeptide spanning residues 29-32 (QGSK) is cleaved from the precursor. The 225-residue stretch at 33–257 (ILEGRECIPH…YTTWIKKTMD (225 aa)) folds into the Peptidase S1 domain. 6 disulfides stabilise this stretch: Cys39/Cys173, Cys58/Cys74, Cys145/Cys246, Cys152/Cys218, Cys184/Cys198, and Cys208/Cys233. The Charge relay system role is filled by His73. Asn110 carries N-linked (GlcNAc...) asparagine glycosylation. Catalysis depends on Asp120, which acts as the Charge relay system. Catalysis depends on Ser212, which acts as the Charge relay system.

It belongs to the peptidase S1 family. Kallikrein subfamily. Interacts with SPINK9. As to expression, expressed in the limbic system of mouse brain and is localized at highest concentration in pyramidal neurons of the hippocampal CA1-3 subfields. Also detected in spinal cord gray matter and in keratinized stratified epithelia of epidermis, hair, tongue, palate, nasal cavity, pharynges, esophagus and forestomach. In skin and mucus membranes, expressed in stratum spinosum and stratum granulosum. Expressed during estrus in vaginal epithelial cells but not stromal cells. Within the vaginal epithelium, expressed in prickle cells, granular cells and parakeratotic cells but not in basal cells. Not expressed in uterus. Expressed in the keratinocytes.

Its subcellular location is the secreted. It is found in the cytoplasm. The catalysed reaction is Cleavage of amide substrates following the basic amino acids Arg or Lys at the P1 position, with a preference for Arg over Lys.. With respect to regulation, strongly inhibited by diisopropyl fluorophosphate, leupeptin and (4-amidinophenyl)methanesulfonyl 1-fluoride. Serine protease which is capable of degrading a number of proteins such as casein, fibrinogen, kininogen, fibronectin and collagen type IV. Also cleaves L1CAM in response to increased neural activity. Induces neurite outgrowth and fasciculation of cultured hippocampal neurons. Plays a role in the formation and maturation of orphan and small synaptic boutons in the Schaffer-collateral pathway, regulates Schaffer-collateral long-term potentiation in the hippocampus and is required for memory acquisition and synaptic plasticity. Involved in skin desquamation and keratinocyte proliferation. Plays a role in the secondary phase of pathogenesis following spinal cord injury. The protein is Kallikrein-8 (Klk8) of Mus musculus (Mouse).